The following is a 109-amino-acid chain: A-type ATP synthase subunit F (109 aa).

It belongs to the V-ATPase F subunit family. As to quaternary structure, has multiple subunits with at least A(3), B(3), C, D, E, F, H, I and proteolipid K(x).

It localises to the cell membrane. Component of the A-type ATP synthase that produces ATP from ADP in the presence of a proton gradient across the membrane. The sequence is that of A-type ATP synthase subunit F from Halorubrum lacusprofundi (strain ATCC 49239 / DSM 5036 / JCM 8891 / ACAM 34).